Here is a 136-residue protein sequence, read N- to C-terminus: MTGGKSAGGKAGTTKNAQSRSSKAGLAFPVGRVHRLLRKGNYAQRVGAGAPVYLAAVLEYLAAEILELAGNAARDNKKTRIIPRHLQLAIRNDEELNKLLGHVTIAQGGVLPNIHQNLLPKKTAKTAGGKPASQEL.

Residues 1-11 (MTGGKSAGGKA) show a composition bias toward gly residues. The tract at residues 1-23 (MTGGKSAGGKAGTTKNAQSRSSK) is disordered. N6-acetyllysine occurs at positions 5 and 10. At glutamine 107 the chain carries N5-methylglutamine. The residue at position 133 (serine 133) is a Phosphoserine. The short motif at 133–134 (SQ) is the [ST]-Q motif element.

Belongs to the histone H2A family. The nucleosome is a histone octamer containing two molecules each of H2A, H2B, H3 and H4 assembled in one H3-H4 heterotetramer and two H2A-H2B heterodimers. The octamer wraps approximately 147 bp of DNA. Post-translationally, phosphorylated to form H2AS128ph (gamma-H2A) in response to DNA double-strand breaks (DSBs) generated by exogenous genotoxic agents and by stalled replication forks. Phosphorylation is dependent on the DNA damage checkpoint kinases MEC1/ATR and TEL1/ATM, spreads on either side of a detected DSB site and may mark the surrounding chromatin for recruitment of proteins required for DNA damage signaling and repair. Gamma-H2A is removed from the DNA prior to the strand invasion-primer extension step of the repair process and subsequently dephosphorylated. Dephosphorylation is necessary for efficient recovery from the DNA damage checkpoint. Acetylated by ESA1 to form H2AK4ac and H2AK7ac.

Its subcellular location is the nucleus. The protein resides in the chromosome. Its function is as follows. Core component of nucleosome which plays a central role in DNA double strand break (DSB) repair. Nucleosomes wrap and compact DNA into chromatin, limiting DNA accessibility to the cellular machineries which require DNA as a template. Histones thereby play a central role in transcription regulation, DNA repair, DNA replication and chromosomal stability. DNA accessibility is regulated via a complex set of post-translational modifications of histones, also called histone code, and nucleosome remodeling. This is Histone H2A (hta1) from Botryotinia fuckeliana (strain B05.10) (Noble rot fungus).